Here is a 708-residue protein sequence, read N- to C-terminus: Ribosomal RNA large subunit methyltransferase K/L (708 aa).

Residues 43-154 enclose the THUMP domain; that stretch reads QGYQITLWTR…RGKITIGINF (112 aa).

The protein belongs to the methyltransferase superfamily. RlmKL family.

It is found in the cytoplasm. It carries out the reaction guanosine(2445) in 23S rRNA + S-adenosyl-L-methionine = N(2)-methylguanosine(2445) in 23S rRNA + S-adenosyl-L-homocysteine + H(+). It catalyses the reaction guanosine(2069) in 23S rRNA + S-adenosyl-L-methionine = N(2)-methylguanosine(2069) in 23S rRNA + S-adenosyl-L-homocysteine + H(+). Its function is as follows. Specifically methylates the guanine in position 2445 (m2G2445) and the guanine in position 2069 (m7G2069) of 23S rRNA. This chain is Ribosomal RNA large subunit methyltransferase K/L, found in Shewanella amazonensis (strain ATCC BAA-1098 / SB2B).